The primary structure comprises 105 residues: Insulin (105 aa).

The signal sequence occupies residues 1–24 (MALWTRLRPLLALLALWPPPPARA). Intrachain disulfides connect C31-C91, C43-C104, and C90-C95. Residues 57–82 (EVEGPQVGALELAGGPGAGGLEGPPQ) constitute a propeptide, c peptide.

The protein belongs to the insulin family. As to quaternary structure, heterodimer of a B chain and an A chain linked by two disulfide bonds.

Its subcellular location is the secreted. Functionally, insulin decreases blood glucose concentration. It increases cell permeability to monosaccharides, amino acids and fatty acids. It accelerates glycolysis, the pentose phosphate cycle, and glycogen synthesis in liver. The protein is Insulin (INS) of Bos taurus (Bovine).